A 1944-amino-acid polypeptide reads, in one-letter code: Anaphase-promoting complex subunit 1 (1944 aa).

S51 and S60 each carry phosphoserine. A Phosphothreonine modification is found at T291. Positions E312–S343 are disordered. 7 positions are modified to phosphoserine: S313, S341, S343, S355, S362, S373, and S377. Low complexity predominate over residues S323–S343. The interval N370–F395 is disordered. The span at S384–D393 shows a compositional bias: polar residues. At T537 the chain carries Phosphothreonine. 2 positions are modified to phosphoserine: S547 and S555. Y571 is modified (phosphotyrosine). Phosphoserine is present on residues S680, S686, and S688. The tract at residues N991–D1014 is disordered. Polar residues predominate over residues V998–T1007. PC repeat units lie at residues A1297 to L1325, G1366 to L1404, G1467 to A1501, and L1520 to Y1552.

It belongs to the APC1 family. In terms of assembly, the mammalian APC/C is composed at least of 14 distinct subunits ANAPC1, ANAPC2, CDC27/APC3, ANAPC4, ANAPC5, CDC16/APC6, ANAPC7, CDC23/APC8, ANAPC10, ANAPC11, CDC26/APC12, ANAPC13, ANAPC15 and ANAPC16 that assemble into a complex of at least 19 chains with a combined molecular mass of around 1.2 MDa; APC/C interacts with FZR1 and FBXO5. Phosphorylated. Phosphorylation on Ser-355 occurs specifically during mitosis. In terms of tissue distribution, abundantly expressed in proliferating fibroblasts, juvenile testis, adult brain and epididymis.

The protein operates within protein modification; protein ubiquitination. In terms of biological role, component of the anaphase promoting complex/cyclosome (APC/C), a cell cycle-regulated E3 ubiquitin ligase that controls progression through mitosis and the G1 phase of the cell cycle. The APC/C complex acts by mediating ubiquitination and subsequent degradation of target proteins: it mainly mediates the formation of 'Lys-11'-linked polyubiquitin chains and, to a lower extent, the formation of 'Lys-48'- and 'Lys-63'-linked polyubiquitin chains. The APC/C complex catalyzes assembly of branched 'Lys-11'-/'Lys-48'-linked branched ubiquitin chains on target proteins. In Mus musculus (Mouse), this protein is Anaphase-promoting complex subunit 1 (Anapc1).